Reading from the N-terminus, the 312-residue chain is Ribonuclease Z (312 aa).

His61, His63, Asp65, His66, His148, Asp216, and His275 together coordinate Zn(2+). Asp65 serves as the catalytic Proton acceptor.

The protein belongs to the RNase Z family. In terms of assembly, homodimer. Requires Zn(2+) as cofactor.

It catalyses the reaction Endonucleolytic cleavage of RNA, removing extra 3' nucleotides from tRNA precursor, generating 3' termini of tRNAs. A 3'-hydroxy group is left at the tRNA terminus and a 5'-phosphoryl group is left at the trailer molecule.. Its function is as follows. Zinc phosphodiesterase, which displays some tRNA 3'-processing endonuclease activity. Probably involved in tRNA maturation, by removing a 3'-trailer from precursor tRNA. This is Ribonuclease Z from Clostridium tetani (strain Massachusetts / E88).